Reading from the N-terminus, the 130-residue chain is MNGKYYYGTGRRKSSVARVFLIKGTGQIIVNGRPVDEFFARETSRMVVRQPLVLTENAESFDIKVNVVGGGETGQSGAIRHGITRALIDFDAALKPALSQAGFVTRDAREVERKKPGLRKARRAKQFSKR.

The protein belongs to the universal ribosomal protein uS9 family.

The protein is Small ribosomal subunit protein uS9 of Neisseria meningitidis serogroup C (strain 053442).